Reading from the N-terminus, the 459-residue chain is Putrescine aminotransferase (459 aa).

Residues 150–151 and Gln-274 contribute to the pyridoxal 5'-phosphate site; that span reads GT. Lys-300 carries the N6-(pyridoxal phosphate)lysine modification. Thr-332 provides a ligand contact to pyridoxal 5'-phosphate.

This sequence belongs to the class-III pyridoxal-phosphate-dependent aminotransferase family. Putrescine aminotransferase subfamily. It depends on pyridoxal 5'-phosphate as a cofactor.

It carries out the reaction an alkane-alpha,omega-diamine + 2-oxoglutarate = an omega-aminoaldehyde + L-glutamate. The enzyme catalyses putrescine + 2-oxoglutarate = 1-pyrroline + L-glutamate + H2O. The catalysed reaction is cadaverine + 2-oxoglutarate = 5-aminopentanal + L-glutamate. Its pathway is amine and polyamine degradation; putrescine degradation; 4-aminobutanal from putrescine (transaminase route): step 1/1. Catalyzes the aminotransferase reaction from putrescine to 2-oxoglutarate, leading to glutamate and 4-aminobutanal, which spontaneously cyclizes to form 1-pyrroline. This is the first step in one of two pathways for putrescine degradation, where putrescine is converted into 4-aminobutanoate (gamma-aminobutyrate or GABA) via 4-aminobutanal. Also functions as a cadaverine transaminase in a a L-lysine degradation pathway to succinate that proceeds via cadaverine, glutarate and L-2-hydroxyglutarate. The chain is Putrescine aminotransferase from Escherichia coli O9:H4 (strain HS).